Reading from the N-terminus, the 575-residue chain is Membrane protein insertase YidC (575 aa).

A run of 6 helical transmembrane segments spans residues 6–26 (VFLI…WGKD), 357–377 (FSIM…LHSF), 381–401 (WGWA…PLSA), 448–468 (GGCL…WVLV), 490–510 (PYFI…KLTP), and 526–546 (PLVF…YWVV).

This sequence belongs to the OXA1/ALB3/YidC family. Type 1 subfamily. As to quaternary structure, interacts with the Sec translocase complex via SecD. Specifically interacts with transmembrane segments of nascent integral membrane proteins during membrane integration.

Its subcellular location is the cell inner membrane. Functionally, required for the insertion and/or proper folding and/or complex formation of integral membrane proteins into the membrane. Involved in integration of membrane proteins that insert both dependently and independently of the Sec translocase complex, as well as at least some lipoproteins. Aids folding of multispanning membrane proteins. The protein is Membrane protein insertase YidC of Xanthomonas campestris pv. campestris (strain B100).